Here is a 155-residue protein sequence, read N- to C-terminus: Protein-export protein SecB 1 (155 aa).

The protein belongs to the SecB family. As to quaternary structure, homotetramer, a dimer of dimers. One homotetramer interacts with 1 SecA dimer.

Its subcellular location is the cytoplasm. One of the proteins required for the normal export of preproteins out of the cell cytoplasm. It is a molecular chaperone that binds to a subset of precursor proteins, maintaining them in a translocation-competent state. It also specifically binds to its receptor SecA. The chain is Protein-export protein SecB 1 from Polaromonas naphthalenivorans (strain CJ2).